The chain runs to 477 residues: Myc-associated zinc finger protein (477 aa).

Disordered stretches follow at residues A59–A78 and T121–A144. Residues P130 to V140 show a composition bias toward pro residues. C2H2-type zinc fingers lie at residues Y190–H212, H279–H301, Y307–H329, and Y337–H360. Position 361 is a phosphoserine (S361). The segment at F366–H388 adopts a C2H2-type 5 zinc-finger fold. A C2H2-type 6; atypical zinc finger spans residues V392 to H413.

As to quaternary structure, interacts with BPTF. As to expression, expressed in Purkinje cells in the brain (at protein level).

Its subcellular location is the nucleus. Transcriptional regulator. Acts as a transcriptional activator that binds to purine-rich GAGA sites found in the promoter of many genes including insulin I and II and islet amyloid polypeptide. This chain is Myc-associated zinc finger protein (Maz), found in Mus musculus (Mouse).